A 183-amino-acid chain; its full sequence is Dual-action ribosomal maturation protein DarP (183 aa).

The protein belongs to the DarP family.

It is found in the cytoplasm. Member of a network of 50S ribosomal subunit biogenesis factors which assembles along the 30S-50S interface, preventing incorrect 23S rRNA structures from forming. Promotes peptidyl transferase center (PTC) maturation. In Klebsiella pneumoniae (strain 342), this protein is Dual-action ribosomal maturation protein DarP.